We begin with the raw amino-acid sequence, 291 residues long: 4-hydroxy-tetrahydrodipicolinate synthase (291 aa).

Thr47 is a binding site for pyruvate. Tyr134 functions as the Proton donor/acceptor in the catalytic mechanism. Lys162 serves as the catalytic Schiff-base intermediate with substrate. Pyruvate is bound at residue Ile205.

Belongs to the DapA family. Homotetramer; dimer of dimers.

It is found in the cytoplasm. It carries out the reaction L-aspartate 4-semialdehyde + pyruvate = (2S,4S)-4-hydroxy-2,3,4,5-tetrahydrodipicolinate + H2O + H(+). Its pathway is amino-acid biosynthesis; L-lysine biosynthesis via DAP pathway; (S)-tetrahydrodipicolinate from L-aspartate: step 3/4. In terms of biological role, catalyzes the condensation of (S)-aspartate-beta-semialdehyde [(S)-ASA] and pyruvate to 4-hydroxy-tetrahydrodipicolinate (HTPA). The sequence is that of 4-hydroxy-tetrahydrodipicolinate synthase from Methanospirillum hungatei JF-1 (strain ATCC 27890 / DSM 864 / NBRC 100397 / JF-1).